A 428-amino-acid chain; its full sequence is Histidinol dehydrogenase (428 aa).

Residues serine 234, glutamine 256, and histidine 259 each contribute to the substrate site. Residues glutamine 256 and histidine 259 each coordinate Zn(2+). Active-site proton acceptor residues include glutamate 323 and histidine 324. Substrate is bound by residues histidine 324, aspartate 357, glutamate 411, and histidine 416. Aspartate 357 contributes to the Zn(2+) binding site. A Zn(2+)-binding site is contributed by histidine 416.

This sequence belongs to the histidinol dehydrogenase family. It depends on Zn(2+) as a cofactor.

It carries out the reaction L-histidinol + 2 NAD(+) + H2O = L-histidine + 2 NADH + 3 H(+). It functions in the pathway amino-acid biosynthesis; L-histidine biosynthesis; L-histidine from 5-phospho-alpha-D-ribose 1-diphosphate: step 9/9. Catalyzes the sequential NAD-dependent oxidations of L-histidinol to L-histidinaldehyde and then to L-histidine. The protein is Histidinol dehydrogenase of Campylobacter jejuni (strain RM1221).